Reading from the N-terminus, the 211-residue chain is Transcriptional regulator NarO (211 aa).

In terms of domain architecture, HTH bat-type spans 154 to 205 (LTARQREVLETAHEMGYFEHPREANATEVAAALDINRSTFTEHLSAAQSKLL).

Functionally, activates transcription of the denitrifying genes (nitrate reductase narA and nitrite reductase nirK) under anaerobic conditions. This chain is Transcriptional regulator NarO, found in Haloferax volcanii (strain ATCC 29605 / DSM 3757 / JCM 8879 / NBRC 14742 / NCIMB 2012 / VKM B-1768 / DS2) (Halobacterium volcanii).